A 418-amino-acid chain; its full sequence is Inhibitor of growth protein 3 (418 aa).

Residues 127–165 (DTPSQPVNNHHAHSHTPVEKRKYNPTSHHTTTDHIPEKK) form a disordered region. Residues Lys-148, Lys-165, and Lys-167 each participate in a glycyl lysine isopeptide (Lys-Gly) (interchain with G-Cter in SUMO2) cross-link. Over residues 156–165 (TTTDHIPEKK) the composition is skewed to basic and acidic residues. Residue Lys-181 is modified to N6-acetyllysine. Lys-256 participates in a covalent cross-link: Glycyl lysine isopeptide (Lys-Gly) (interchain with G-Cter in SUMO2). The residue at position 264 (Lys-264) is an N6-acetyllysine. The disordered stretch occupies residues 286-325 (TQNASSSAADSRSGRKSKNNNKSSSQQSSSSSSSSSLSSC). Positions 305 to 325 (NNKSSSQQSSSSSSSSSLSSC) are enriched in low complexity. A PHD-type zinc finger spans residues 360–409 (PRYCICNQVSYGEMVGCDNQDCPIEWFHYGCVGLTEAPKGKWYCPQCTAA). Residues Cys-363, Cys-365, Cys-376, Cys-381, His-387, Cys-390, Cys-403, and Cys-406 each coordinate Zn(2+).

It belongs to the ING family. Interacts with H3K4me3 and to a lesser extent with H3K4me2. Component of the NuA4 histone acetyltransferase complex which contains the catalytic subunit KAT5/TIP60 and the subunits EP400, TRRAP/PAF400, BRD8/SMAP, EPC1, DMAP1/DNMAP1, RUVBL1/TIP49, RUVBL2, ING3, actin, ACTL6A/BAF53A, MORF4L1/MRG15, MORF4L2/MRGX, MRGBP, YEATS4/GAS41, VPS72/YL1 and MEAF6. The NuA4 complex interacts with MYC and the adenovirus E1A protein. HTATTIP/TIP60, EPC1, and ING3 together constitute a minimal HAT complex termed Piccolo NuA4. Component of a SWR1-like complex. In terms of tissue distribution, expressed in brain, heart, kidney, liver, lung, ovaries, placenta, prostate, skeletal muscle, small intestine, spleen, testis and thymus.

The protein resides in the nucleus. Component of the NuA4 histone acetyltransferase (HAT) complex which is involved in transcriptional activation of select genes principally by acetylation of nucleosomal histones H4 and H2A. This modification may both alter nucleosome - DNA interactions and promote interaction of the modified histones with other proteins which positively regulate transcription. This complex may be required for the activation of transcriptional programs associated with oncogene and proto-oncogene mediated growth induction, tumor suppressor mediated growth arrest and replicative senescence, apoptosis, and DNA repair. NuA4 may also play a direct role in DNA repair when directly recruited to sites of DNA damage. Component of a SWR1-like complex that specifically mediates the removal of histone H2A.Z/H2AZ1 from the nucleosome. This chain is Inhibitor of growth protein 3 (ING3), found in Homo sapiens (Human).